A 492-amino-acid polypeptide reads, in one-letter code: PTS system N-acetylmuramic acid-specific EIIBC component (492 aa).

The region spanning 1 to 89 (MAKINQSVIA…NELLNSSTPT (89 aa)) is the PTS EIIB type-1 domain. The active-site Phosphocysteine intermediate; for EIIB activity is Cys28. The 365-residue stretch at 123 to 487 (TKFATIFTPL…KKIEVLKADV (365 aa)) folds into the PTS EIIC type-1 domain. A run of 10 helical transmembrane segments spans residues 125–145 (FATI…LLGF), 167–187 (IIGY…ILIG), 193–213 (AFGG…LSYN), 227–247 (FFGY…AAIL), 265–285 (MILT…IFIM), 311–331 (ILAG…FVPV), 344–364 (LFPI…ALYV), 378–398 (GAII…VTLP), 403–423 (FITA…IAYL), and 450–470 (IFVG…SGFV).

It is found in the cell inner membrane. The catalysed reaction is N-acetyl-beta-D-muramate(out) + N(pros)-phospho-L-histidyl-[protein] = N-acetyl-beta-D-muramate 6-phosphate(in) + L-histidyl-[protein]. In terms of biological role, the phosphoenolpyruvate-dependent sugar phosphotransferase system (sugar PTS), a major carbohydrate active transport system, catalyzes the phosphorylation of incoming sugar substrates concomitantly with their translocation across the cell membrane. This system is involved in N-acetylmuramic acid (MurNAc) transport, yielding cytoplasmic MurNAc-6-P. Is also able to take up anhydro-N-acetylmuramic acid (anhMurNAc), but cannot phosphorylate the carbon 6, probably because of the 1,6-anhydro ring. The polypeptide is PTS system N-acetylmuramic acid-specific EIIBC component (murP) (Photorhabdus laumondii subsp. laumondii (strain DSM 15139 / CIP 105565 / TT01) (Photorhabdus luminescens subsp. laumondii)).